Reading from the N-terminus, the 197-residue chain is Shikimate kinase (197 aa).

15-20 (GSGKSS) is a binding site for ATP. S19 is a binding site for Mg(2+). Positions 37, 61, and 83 each coordinate substrate. R121 serves as a coordination point for ATP. Residue R148 coordinates substrate.

Belongs to the shikimate kinase family. Monomer. It depends on Mg(2+) as a cofactor.

Its subcellular location is the cytoplasm. It catalyses the reaction shikimate + ATP = 3-phosphoshikimate + ADP + H(+). The protein operates within metabolic intermediate biosynthesis; chorismate biosynthesis; chorismate from D-erythrose 4-phosphate and phosphoenolpyruvate: step 5/7. Catalyzes the specific phosphorylation of the 3-hydroxyl group of shikimic acid using ATP as a cosubstrate. This is Shikimate kinase from Chlorobium phaeovibrioides (strain DSM 265 / 1930) (Prosthecochloris vibrioformis (strain DSM 265)).